Reading from the N-terminus, the 299-residue chain is Caspase-1 (299 aa).

Positions methionine 1–aspartate 28 are excised as a propeptide. The disordered stretch occupies residues methionine 1–proline 45. Residues histidine 136 and cysteine 178 contribute to the active site. A propeptide spanning residues glycine 185 to aspartate 195 is cleaved from the precursor.

Belongs to the peptidase C14A family. In terms of assembly, heterotetramer that consists of two anti-parallel arranged heterodimers, each one formed by a 19/18 kDa (p19/18) and a 12 kDa (p12) subunit. The two subunits are derived from the precursor sequence by an autocatalytic mechanism.

Involved in the activation cascade of caspases responsible for apoptosis execution. Inhibited by the baculovirus anti-apoptotic protein p35. Cleaves p35 and nuclear immunophilin FKBP46. This chain is Caspase-1, found in Spodoptera frugiperda (Fall armyworm).